A 393-amino-acid chain; its full sequence is Short-chain dehydrogenase/reductase family 42E member 1 (393 aa).

The active-site Proton acceptor is tyrosine 152. Lysine 156 is a binding site for NAD(+). 2 consecutive transmembrane segments (helical) span residues 282–302 and 371–391; these read LPLT…FILG and GLVI…SVIL.

This sequence belongs to the 3-beta-HSD family.

It localises to the membrane. The polypeptide is Short-chain dehydrogenase/reductase family 42E member 1 (SDR42E1) (Bos taurus (Bovine)).